A 651-amino-acid polypeptide reads, in one-letter code: MHLATGLAVALPFIGAASAQYFPPPVEGVTVVESKFDKNVKITYKENDICETTEGVRSFTGHVHLPPNNNDFGVNQNYSINTFFWFFEAREDPKNAPLSIWLNGGPGSSSMIGLFQENGPCMVNNDSNSTTNNPYSWNNKVNMLYIDQPNQVGFSYDVPTNVTVNPINDEVTVADFSNGVPEQNNTLLVGTLGSQNPYATANNTQNAARSIWHFAQVWFQEFPEYKPNNDKVSIWTESYGGRYGPAFTSYFQEQNEKIKNHTITEEGEMHILHLDTVGIINGCVDLMEQATSYPDFAYNNTYGIKAYNQSQYDSMINEFYRTGGCRDQLIHCRDVAAESDPHFYSHNETVNKICNDAGDFCGQKLEDAFESANLGFYDIAHPLNDPFPPQFYKGYLSQAHVLADMGMPVNFSQASDAVWKAFHTVGDYGRGDVRGYIDDLAYLLENGIKVALVYGDRDYICNWFGGEKVSLALNYTGTENFHKAGYTDVKVNSQVGGQVRQYGNFSFTRVYEAGHEVPAYQPEVSLEIFHRIMFNKDIATGEIDIAQKPDYSTTGTADTFHIKNDIPPEPEPTCYVLSMGRTCSEEQVKAVKDGTAVVENYIVKSPAGKKQGPPPTSTSPPSPTSSSEGSVKEFSVSVLGVSVLAAITFFL.

The first 19 residues, 1-19, serve as a signal peptide directing secretion; it reads MHLATGLAVALPFIGAASA. Cys50 and Cys121 are oxidised to a cystine. N-linked (GlcNAc...) asparagine glycans are attached at residues Asn77, Asn125, Asn128, Asn161, Asn184, and Asn202. Ser238 is an active-site residue. N-linked (GlcNAc...) asparagine glycans are attached at residues Asn260, Asn299, Asn308, Asn347, and Asn410. Disulfide bonds link Cys325–Cys361 and Cys332–Cys354. Asp458 is an active-site residue. Cys461 is a binding site for substrate. Residues Asn474 and Asn504 are each glycosylated (N-linked (GlcNAc...) asparagine). The active site involves His515. Glu516 lines the substrate pocket. A disordered region spans residues 604-630; sequence KSPAGKKQGPPPTSTSPPSPTSSSEGS. A compositionally biased stretch (pro residues) spans 612–623; the sequence is GPPPTSTSPPSP. Residue Ser625 is the site of GPI-anchor amidated serine attachment. Positions 626–651 are cleaved as a propeptide — removed in mature form; the sequence is SSEGSVKEFSVSVLGVSVLAAITFFL.

The protein belongs to the peptidase S10 family.

The protein resides in the cell membrane. It catalyses the reaction Preferential release of a C-terminal arginine or lysine residue.. Functionally, extracellular serine carboxypeptidase that contributes to pathogenicity. The chain is Carboxypeptidase S1 homolog A (SCPA) from Arthroderma otae (strain ATCC MYA-4605 / CBS 113480) (Microsporum canis).